The chain runs to 617 residues: UvrABC system protein C (617 aa).

In terms of domain architecture, GIY-YIG spans 22-100 (KLPGVYRFFD…IKALSPKYNI (79 aa)). The UVR domain maps to 209–244 (DELTRTLQHKMQTAAANLQFEEAARYRDQIQALGIM).

This sequence belongs to the UvrC family. As to quaternary structure, interacts with UvrB in an incision complex.

The protein localises to the cytoplasm. The UvrABC repair system catalyzes the recognition and processing of DNA lesions. UvrC both incises the 5' and 3' sides of the lesion. The N-terminal half is responsible for the 3' incision and the C-terminal half is responsible for the 5' incision. The protein is UvrABC system protein C of Neisseria meningitidis serogroup A / serotype 4A (strain DSM 15465 / Z2491).